The sequence spans 81 residues: MAHSVKIYDTCIGCTQCVRACPTDVLEMIPWEGCKAKQIASAPRTEDCAGCKRCESACPTDFLSVRVYLWHETTRSMGLAY.

4Fe-4S ferredoxin-type domains are found at residues 2-31 (AHSVKIYDTCIGCTQCVRACPTDVLEMIPW) and 39-68 (IASAPRTEDCAGCKRCESACPTDFLSVRVY). [4Fe-4S] cluster contacts are provided by C11, C14, C17, C21, C48, C51, C54, and C58.

The eukaryotic PSI reaction center is composed of at least 11 subunits. [4Fe-4S] cluster serves as cofactor.

The protein resides in the plastid. It localises to the chloroplast thylakoid membrane. It carries out the reaction reduced [plastocyanin] + hnu + oxidized [2Fe-2S]-[ferredoxin] = oxidized [plastocyanin] + reduced [2Fe-2S]-[ferredoxin]. Functionally, apoprotein for the two 4Fe-4S centers FA and FB of photosystem I (PSI); essential for photochemical activity. FB is the terminal electron acceptor of PSI, donating electrons to ferredoxin. The C-terminus interacts with PsaA/B/D and helps assemble the protein into the PSI complex. Required for binding of PsaD and PsaE to PSI. PSI is a plastocyanin-ferredoxin oxidoreductase, converting photonic excitation into a charge separation, which transfers an electron from the donor P700 chlorophyll pair to the spectroscopically characterized acceptors A0, A1, FX, FA and FB in turn. The chain is Photosystem I iron-sulfur center from Pinus thunbergii (Japanese black pine).